The sequence spans 130 residues: Large ribosomal subunit protein bL19 (130 aa).

It belongs to the bacterial ribosomal protein bL19 family.

Its function is as follows. This protein is located at the 30S-50S ribosomal subunit interface and may play a role in the structure and function of the aminoacyl-tRNA binding site. The polypeptide is Large ribosomal subunit protein bL19 (Methylorubrum populi (strain ATCC BAA-705 / NCIMB 13946 / BJ001) (Methylobacterium populi)).